An 86-amino-acid chain; its full sequence is Weak neurotoxin 10 (86 aa).

The N-terminal stretch at 1-21 (MKTLLLTLVVVTIVCLDLGYT) is a signal peptide. 5 cysteine pairs are disulfide-bonded: Cys-24–Cys-45, Cys-27–Cys-32, Cys-38–Cys-63, Cys-67–Cys-78, and Cys-79–Cys-84.

Belongs to the three-finger toxin family. Ancestral subfamily. Orphan group II sub-subfamily. In terms of tissue distribution, expressed by the venom gland.

The protein localises to the secreted. Functionally, binds with low affinity to muscular (alpha-1-beta-1-delta-epsilon/CHRNA1-CHRNB1-CHRND-CHRNE) and very low affinity to neuronal (alpha-7/CHRNA7) nicotinic acetylcholine receptor (nAChR). In Naja sputatrix (Malayan spitting cobra), this protein is Weak neurotoxin 10 (WNTX10).